A 121-amino-acid polypeptide reads, in one-letter code: Basic phospholipase A2 BmjeTX-II (121 aa).

7 disulfides stabilise this stretch: Cys-26–Cys-114, Cys-28–Cys-45, Cys-44–Cys-95, Cys-50–Cys-121, Cys-51–Cys-88, Cys-58–Cys-82, and Cys-76–Cys-86. 3 residues coordinate Ca(2+): Tyr-27, Gly-29, and Gly-31. Residue His-48 is part of the active site. Asp-49 contributes to the Ca(2+) binding site. Asp-89 is a catalytic residue.

Ca(2+) serves as cofactor. In terms of tissue distribution, expressed by the venom gland.

Its subcellular location is the secreted. It carries out the reaction a 1,2-diacyl-sn-glycero-3-phosphocholine + H2O = a 1-acyl-sn-glycero-3-phosphocholine + a fatty acid + H(+). Its function is as follows. Snake venom phospholipase A2 (PLA2) that induces blockade of neuromuscular contraction in an indirectly stimulated chick biventer cervicis nerve-muscle preparation. Does not inhibit contraction of chick biventer cervicic nerve-muscle preparation in response to treatment with acetylcholine or KCl. The neuromuscular blockade is mediated by inhibitory action at the presynaptic motor nerve endings. Lyses skeletal myoblasts and myotubes in vitro, and intramuscular injection causes local muscle necrosis. Induces edema in the mouse foot pad. Induces a transient increase of IL-6 levels. PLA2 catalyzes the calcium-dependent hydrolysis of the 2-acyl groups in 3-sn-phosphoglycerides. The polypeptide is Basic phospholipase A2 BmjeTX-II (Bothrops marajoensis (Marajo lancehead)).